A 540-amino-acid chain; its full sequence is Glucose-6-phosphate isomerase (540 aa).

Catalysis depends on glutamate 350, which acts as the Proton donor. Catalysis depends on residues histidine 381 and lysine 503.

It belongs to the GPI family.

The protein localises to the cytoplasm. The catalysed reaction is alpha-D-glucose 6-phosphate = beta-D-fructose 6-phosphate. It participates in carbohydrate biosynthesis; gluconeogenesis. The protein operates within carbohydrate degradation; glycolysis; D-glyceraldehyde 3-phosphate and glycerone phosphate from D-glucose: step 2/4. Its function is as follows. Catalyzes the reversible isomerization of glucose-6-phosphate to fructose-6-phosphate. This chain is Glucose-6-phosphate isomerase, found in Burkholderia mallei (strain NCTC 10247).